The chain runs to 251 residues: Flagellar L-ring protein (251 aa).

Residues M1–A17 form the signal peptide. A lipid anchor (N-palmitoyl cysteine) is attached at C18. C18 carries the S-diacylglycerol cysteine lipid modification.

Belongs to the FlgH family. In terms of assembly, the basal body constitutes a major portion of the flagellar organelle and consists of four rings (L,P,S, and M) mounted on a central rod.

It localises to the cell outer membrane. Its subcellular location is the bacterial flagellum basal body. Functionally, assembles around the rod to form the L-ring and probably protects the motor/basal body from shearing forces during rotation. The sequence is that of Flagellar L-ring protein from Maricaulis maris (strain MCS10) (Caulobacter maris).